The following is a 263-amino-acid chain: 3-methyl-2-oxobutanoate hydroxymethyltransferase (263 aa).

Residues aspartate 45 and aspartate 84 each coordinate Mg(2+). 3-methyl-2-oxobutanoate is bound by residues 45 to 46 (DS), aspartate 84, and lysine 112. Glutamate 114 serves as a coordination point for Mg(2+). Catalysis depends on glutamate 181, which acts as the Proton acceptor.

This sequence belongs to the PanB family. As to quaternary structure, homodecamer; pentamer of dimers. The cofactor is Mg(2+).

It localises to the cytoplasm. The catalysed reaction is 3-methyl-2-oxobutanoate + (6R)-5,10-methylene-5,6,7,8-tetrahydrofolate + H2O = 2-dehydropantoate + (6S)-5,6,7,8-tetrahydrofolate. Its pathway is cofactor biosynthesis; (R)-pantothenate biosynthesis; (R)-pantoate from 3-methyl-2-oxobutanoate: step 1/2. Catalyzes the reversible reaction in which hydroxymethyl group from 5,10-methylenetetrahydrofolate is transferred onto alpha-ketoisovalerate to form ketopantoate. This is 3-methyl-2-oxobutanoate hydroxymethyltransferase from Chromohalobacter salexigens (strain ATCC BAA-138 / DSM 3043 / CIP 106854 / NCIMB 13768 / 1H11).